A 448-amino-acid polypeptide reads, in one-letter code: Ribosomal protein uS12 methylthiotransferase RimO (448 aa).

Residues 7–123 (EKVSLVSLGC…IAEIIAEKEG (117 aa)) form the MTTase N-terminal domain. Positions 16, 52, 86, 161, 165, and 168 each coordinate [4Fe-4S] cluster. Residues 147–377 (SSPYYTAYLK…MRTQARVSFK (231 aa)) enclose the Radical SAM core domain. The TRAM domain maps to 380–448 (RSLVDTEELV…DYDLIGEIVP (69 aa)).

It belongs to the methylthiotransferase family. RimO subfamily. [4Fe-4S] cluster is required as a cofactor.

Its subcellular location is the cytoplasm. The enzyme catalyses L-aspartate(89)-[ribosomal protein uS12]-hydrogen + (sulfur carrier)-SH + AH2 + 2 S-adenosyl-L-methionine = 3-methylsulfanyl-L-aspartate(89)-[ribosomal protein uS12]-hydrogen + (sulfur carrier)-H + 5'-deoxyadenosine + L-methionine + A + S-adenosyl-L-homocysteine + 2 H(+). Functionally, catalyzes the methylthiolation of an aspartic acid residue of ribosomal protein uS12. The sequence is that of Ribosomal protein uS12 methylthiotransferase RimO from Geotalea uraniireducens (strain Rf4) (Geobacter uraniireducens).